Consider the following 443-residue polypeptide: 23S rRNA (uracil(1939)-C(5))-methyltransferase RlmD (443 aa).

Positions S12–N70 constitute a TRAM domain. Residues C83, C89, C92, and C171 each coordinate [4Fe-4S] cluster. S-adenosyl-L-methionine is bound by residues Q277, F306, N311, E327, D354, and D374. The active-site Nucleophile is C400.

Belongs to the class I-like SAM-binding methyltransferase superfamily. RNA M5U methyltransferase family. RlmD subfamily.

It catalyses the reaction uridine(1939) in 23S rRNA + S-adenosyl-L-methionine = 5-methyluridine(1939) in 23S rRNA + S-adenosyl-L-homocysteine + H(+). Catalyzes the formation of 5-methyl-uridine at position 1939 (m5U1939) in 23S rRNA. The chain is 23S rRNA (uracil(1939)-C(5))-methyltransferase RlmD from Shewanella woodyi (strain ATCC 51908 / MS32).